We begin with the raw amino-acid sequence, 277 residues long: Zinc finger protein 511 (277 aa).

C2H2-type zinc fingers lie at residues 96 to 121, 123 to 146, and 160 to 185; these read FRCHIAGCKQLFDTLEGYEHHYNALH, NVCSNCKRSFPSNRLLEIHILEWH, and YECLVEGCGLKFKTSKERKDHLIRTH. Residues 225–244 form a disordered region; sequence ESSESMDFSLTPEPVETEPM.

It belongs to the krueppel C2H2-type zinc-finger protein family.

It localises to the nucleus. Functionally, may be involved in transcriptional regulation. This chain is Zinc finger protein 511 (znf511), found in Danio rerio (Zebrafish).